The primary structure comprises 147 residues: Globin (147 aa).

At Ser2 the chain carries N-acetylserine. One can recognise a Globin domain in the interval 2–147 (SLSAAEADLA…IIDALKAAGK (146 aa)). Residue His96 coordinates heme b.

Belongs to the globin family. Monomer.

The polypeptide is Globin (Aplysia limacina (Sea hare)).